The chain runs to 131 residues: Holo-[acyl-carrier-protein] synthase (131 aa).

Residues Asp6 and Glu55 each contribute to the Mg(2+) site.

Belongs to the P-Pant transferase superfamily. AcpS family. Mg(2+) serves as cofactor.

The protein localises to the cytoplasm. It catalyses the reaction apo-[ACP] + CoA = holo-[ACP] + adenosine 3',5'-bisphosphate + H(+). Functionally, transfers the 4'-phosphopantetheine moiety from coenzyme A to a Ser of acyl-carrier-protein. The chain is Holo-[acyl-carrier-protein] synthase from Verminephrobacter eiseniae (strain EF01-2).